The sequence spans 67 residues: Protein C' (67 aa).

This sequence belongs to the rhabdoviruses C protein family.

Seems to stimulates transcription by the viral polymerase. May play a role in viral pathogenesis or transmission by insects vectors. This Vesicular stomatitis Indiana virus (strain 98COE North America) (VSIV) protein is Protein C' (P).